Here is a 456-residue protein sequence, read N- to C-terminus: UDP-N-acetylglucosamine 1-carboxyvinyltransferase (456 aa).

Position 34-35 (34-35 (KN)) interacts with phosphoenolpyruvate. R104 is a binding site for UDP-N-acetyl-alpha-D-glucosamine. C128 acts as the Proton donor in catalysis. C128 is subject to 2-(S-cysteinyl)pyruvic acid O-phosphothioketal. UDP-N-acetyl-alpha-D-glucosamine-binding residues include D319 and I341.

The protein belongs to the EPSP synthase family. MurA subfamily.

It localises to the cytoplasm. The enzyme catalyses phosphoenolpyruvate + UDP-N-acetyl-alpha-D-glucosamine = UDP-N-acetyl-3-O-(1-carboxyvinyl)-alpha-D-glucosamine + phosphate. It functions in the pathway cell wall biogenesis; peptidoglycan biosynthesis. Cell wall formation. Adds enolpyruvyl to UDP-N-acetylglucosamine. The sequence is that of UDP-N-acetylglucosamine 1-carboxyvinyltransferase from Prochlorococcus marinus (strain MIT 9312).